A 343-amino-acid chain; its full sequence is Delta(1)-pyrroline-2-carboxylate/Delta(1)-piperideine-2-carboxylate reductase (343 aa).

The active-site Charge relay system is the S53. H54 acts as the Proton donor in catalysis. R58 is a binding site for substrate. 126-130 provides a ligand contact to NADP(+); that stretch reads HFAAL. T166 lines the substrate pocket. NADP(+) is bound at residue 184–186; the sequence is DLA. 192-193 lines the substrate pocket; the sequence is HG. The Charge relay system role is filled by D194. NADP(+)-binding positions include 236-237 and 309-315; these read HK and RLPGDRR.

The protein belongs to the LDH2/MDH2 oxidoreductase family. Homodimer.

It carries out the reaction L-pipecolate + NADP(+) = Delta(1)-piperideine-2-carboxylate + NADPH + H(+). The catalysed reaction is L-proline + NADP(+) = 1-pyrroline-2-carboxylate + NADPH + H(+). The enzyme catalyses N-methyl-L-alanine + NADP(+) + H2O = methylamine + pyruvate + NADPH + H(+). Is inhibited by the substrate analog pyrrole-2-carboxylate, and by 2-picolinate. Functionally, catalyzes the reduction of both Delta(1)-pyrroline-2-carboxylate (Pyr2C) and Delta(1)-piperideine-2-carboxylate (Pip2C) to L-proline and L-pipecolate, respectively, using NADPH as the electron donor. Can catalyze the reverse oxidation reactions, albeit at a much lower rate. Is also able to catalyze in vitro the NADPH-dependent formation of N-methylalanine from pyruvate and N-methylamine; can act on other alpha-keto acids and specifically uses methylamine and not ammonia for these reductive amination reactions. Can use NADH instead of NADPH, although with much less efficiency. This chain is Delta(1)-pyrroline-2-carboxylate/Delta(1)-piperideine-2-carboxylate reductase, found in Pseudomonas syringae pv. tomato.